The chain runs to 748 residues: Acyl-coenzyme A oxidase (748 aa).

This sequence belongs to the acyl-CoA oxidase family. It depends on FAD as a cofactor.

It localises to the peroxisome. It catalyses the reaction a 2,3-saturated acyl-CoA + O2 = a (2E)-enoyl-CoA + H2O2. The protein operates within lipid metabolism; peroxisomal fatty acid beta-oxidation. The sequence is that of Acyl-coenzyme A oxidase (POX1) from Candida glabrata (strain ATCC 2001 / BCRC 20586 / JCM 3761 / NBRC 0622 / NRRL Y-65 / CBS 138) (Yeast).